A 354-amino-acid polypeptide reads, in one-letter code: Thiamine thiazole synthase 2, chloroplastic (354 aa).

The transit peptide at 1–44 (MATTAASSLLKSSFAGSRLPSATRTTTPSSVAVATPRAGGGPIR) directs the protein to the chloroplast. Positions 17-49 (SRLPSATRTTTPSSVAVATPRAGGGPIRASISS) are disordered. Over residues 20-32 (PSATRTTTPSSVA) the composition is skewed to polar residues. Substrate-binding positions include A97, 117-118 (EQ), G125, and V190. The residue at position 219 (C219) is a 2,3-didehydroalanine (Cys). Residues D221, H236, M288, and 298–300 (RMG) each bind substrate.

This sequence belongs to the THI4 family. In terms of assembly, homooctamer. The cofactor is Fe cation. During the catalytic reaction, a sulfide is transferred from Cys-219 to a reaction intermediate, generating a dehydroalanine residue. As to expression, highest expression in developing embryos and green leaves and a very low level expression seen in endosperm, roots, etiolated shoots and immature ears.

Its subcellular location is the plastid. It is found in the chloroplast. It catalyses the reaction [ADP-thiazole synthase]-L-cysteine + glycine + NAD(+) = [ADP-thiazole synthase]-dehydroalanine + ADP-5-ethyl-4-methylthiazole-2-carboxylate + nicotinamide + 3 H2O + 2 H(+). In terms of biological role, involved in biosynthesis of the thiamine precursor thiazole. Catalyzes the conversion of NAD and glycine to adenosine diphosphate 5-(2-hydroxyethyl)-4-methylthiazole-2-carboxylic acid (ADT), an adenylated thiazole intermediate. The reaction includes an iron-dependent sulfide transfer from a conserved cysteine residue of the protein to a thiazole intermediate. The enzyme can only undergo a single turnover, which suggests it is a suicide enzyme. May have additional roles in adaptation to various stress conditions and in DNA damage tolerance. This is Thiamine thiazole synthase 2, chloroplastic from Zea mays (Maize).